A 380-amino-acid polypeptide reads, in one-letter code: DNA-directed RNA polymerase subunit Rpo1C (380 aa).

It belongs to the RNA polymerase beta' chain family. As to quaternary structure, part of the RNA polymerase complex.

It localises to the cytoplasm. It carries out the reaction RNA(n) + a ribonucleoside 5'-triphosphate = RNA(n+1) + diphosphate. Its function is as follows. DNA-dependent RNA polymerase (RNAP) catalyzes the transcription of DNA into RNA using the four ribonucleoside triphosphates as substrates. Forms part of the jaw domain. The chain is DNA-directed RNA polymerase subunit Rpo1C from Archaeoglobus fulgidus (strain ATCC 49558 / DSM 4304 / JCM 9628 / NBRC 100126 / VC-16).